A 354-amino-acid polypeptide reads, in one-letter code: Protein NDH-DEPENDENT CYCLIC ELECTRON FLOW 5 (354 aa).

Residues 1-49 (MALVHYMNVSRSTFPLSRSSKINLSSSFASLPLQFHKNIKRLESSVPPS) constitute a chloroplast transit peptide.

It is found in the plastid. The protein localises to the chloroplast thylakoid membrane. Functionally, required for both formation and activity of the chloroplast NAD(P)H dehydrogenase (NDH) complex of the photosynthetic electron transport chain. May function in assembly or stabilization of the NDH complex. The polypeptide is Protein NDH-DEPENDENT CYCLIC ELECTRON FLOW 5 (Arabidopsis thaliana (Mouse-ear cress)).